Reading from the N-terminus, the 887-residue chain is CWF19-like protein 2 (887 aa).

Residues 1 to 143 (MEAFSVRFES…DKRTEEECDS (143 aa)) form a disordered region. Positions 11–103 (ASSIEERKEQ…KKQKCQKQSE (93 aa)) form a coiled coil. A compositionally biased stretch (basic and acidic residues) spans 14–72 (IEERKEQTRNARAEVLRQAKHNFEKEQRGEERKRLRDEDTWMLPDVHERIEQFSQEHSE). A Phosphoserine modification is found at serine 71. Positions 73–98 (KKKKKKDKHSKKVKKEKKKKRKKQKC) are enriched in basic residues. The span at 99 to 110 (QKQSESTDSSAS) shows a compositional bias: low complexity. Residues 124–143 (SDKEKTWKVKDKRTEEECDS) are compositionally biased toward basic and acidic residues. Positions 164 to 254 (SSSLKAEKET…RNFEDIVAEK (91 aa)) form a coiled coil. Lysine 168 participates in a covalent cross-link: Glycyl lysine isopeptide (Lys-Gly) (interchain with G-Cter in SUMO2). 2 disordered regions span residues 315-370 (LEME…DEDE) and 405-447 (SEES…GRRE). The span at 342–352 (CRRESALRKNQ) shows a compositional bias: basic and acidic residues. Phosphoserine occurs at positions 354 and 366. A compositionally biased stretch (basic and acidic residues) spans 414–430 (RSDRRQENRKPSDKKPL). A compositionally biased stretch (polar residues) spans 433 to 442 (WSYNANQHST). Serine 478 is subject to Phosphoserine. The stretch at 495-524 (IKAEMMGNMELAEQLKAQLKEANKFKETQM) forms a coiled coil. Lysine 597 participates in a covalent cross-link: Glycyl lysine isopeptide (Lys-Gly) (interchain with G-Cter in SUMO2). Phosphoserine is present on serine 622.

This sequence belongs to the CWF19 family.

The protein is CWF19-like protein 2 (Cwf19l2) of Mus musculus (Mouse).